Here is an 88-residue protein sequence, read N- to C-terminus: Arminin 1b (88 aa).

The signal sequence occupies residues Met-1–Ala-18. Positions Glu-19 to Ala-57 are excised as a propeptide. Valine amide is present on Val-85.

Belongs to the arminin family. Expressed in entodermal epithelium along the body column.

The protein localises to the secreted. It is found in the target cell membrane. Functionally, antimicrobial peptide with a broad-spectrum antimicrobial activity. Keeps its antibacterial activity under a wide range of salt concentrations that mimic physiological conditions of human blood, which is surprising, since Hydra is an obligate freshwater animal with nearly no salt tolerance. Does not affect red blood cells. The polypeptide is Arminin 1b (Hydra vulgaris (Hydra)).